Reading from the N-terminus, the 104-residue chain is Large ribosomal subunit protein uL24 (104 aa).

Residues I41–K61 form a disordered region.

It belongs to the universal ribosomal protein uL24 family. In terms of assembly, part of the 50S ribosomal subunit.

Its function is as follows. One of two assembly initiator proteins, it binds directly to the 5'-end of the 23S rRNA, where it nucleates assembly of the 50S subunit. One of the proteins that surrounds the polypeptide exit tunnel on the outside of the subunit. The polypeptide is Large ribosomal subunit protein uL24 (Wigglesworthia glossinidia brevipalpis).